Here is a 362-residue protein sequence, read N- to C-terminus: 3-dehydroquinate synthase (362 aa).

Residues 74-79, 108-112, 132-133, Lys-145, and Lys-154 contribute to the NAD(+) site; these read DGEEHK, GVTGD, and TT. Residues Glu-187, His-250, and His-267 each contribute to the Zn(2+) site.

It belongs to the sugar phosphate cyclases superfamily. Dehydroquinate synthase family. Co(2+) serves as cofactor. It depends on Zn(2+) as a cofactor. NAD(+) is required as a cofactor.

The protein localises to the cytoplasm. The catalysed reaction is 7-phospho-2-dehydro-3-deoxy-D-arabino-heptonate = 3-dehydroquinate + phosphate. It participates in metabolic intermediate biosynthesis; chorismate biosynthesis; chorismate from D-erythrose 4-phosphate and phosphoenolpyruvate: step 2/7. Its function is as follows. Catalyzes the conversion of 3-deoxy-D-arabino-heptulosonate 7-phosphate (DAHP) to dehydroquinate (DHQ). This chain is 3-dehydroquinate synthase, found in Syntrophotalea carbinolica (strain DSM 2380 / NBRC 103641 / GraBd1) (Pelobacter carbinolicus).